We begin with the raw amino-acid sequence, 185 residues long: ATP-dependent protease subunit HslV (185 aa).

Residue Thr12 is part of the active site. Na(+) is bound by residues Ala168, Cys171, and Thr174.

The protein belongs to the peptidase T1B family. HslV subfamily. In terms of assembly, a double ring-shaped homohexamer of HslV is capped on each side by a ring-shaped HslU homohexamer. The assembly of the HslU/HslV complex is dependent on binding of ATP.

The protein resides in the cytoplasm. The enzyme catalyses ATP-dependent cleavage of peptide bonds with broad specificity.. Allosterically activated by HslU binding. Its function is as follows. Protease subunit of a proteasome-like degradation complex believed to be a general protein degrading machinery. This Cereibacter sphaeroides (strain ATCC 17023 / DSM 158 / JCM 6121 / CCUG 31486 / LMG 2827 / NBRC 12203 / NCIMB 8253 / ATH 2.4.1.) (Rhodobacter sphaeroides) protein is ATP-dependent protease subunit HslV.